The sequence spans 207 residues: Dephospho-CoA kinase (207 aa).

The segment covering 1-11 (MTRSPAPSSPT) has biased composition (polar residues). Residues 1–21 (MTRSPAPSSPTHPRRLGLTGS) form a disordered region. Residues 15–207 (RLGLTGSIGA…DAALRQLEIT (193 aa)) enclose the DPCK domain. 23–28 (GAGKST) serves as a coordination point for ATP.

The protein belongs to the CoaE family.

It is found in the cytoplasm. It carries out the reaction 3'-dephospho-CoA + ATP = ADP + CoA + H(+). The protein operates within cofactor biosynthesis; coenzyme A biosynthesis; CoA from (R)-pantothenate: step 5/5. Catalyzes the phosphorylation of the 3'-hydroxyl group of dephosphocoenzyme A to form coenzyme A. In Deinococcus radiodurans (strain ATCC 13939 / DSM 20539 / JCM 16871 / CCUG 27074 / LMG 4051 / NBRC 15346 / NCIMB 9279 / VKM B-1422 / R1), this protein is Dephospho-CoA kinase.